The primary structure comprises 271 residues: Enolase-phosphatase E1 (271 aa).

Asp-16 and Glu-18 together coordinate Mg(2+). Residues 150 to 151 and Lys-199 contribute to the substrate site; that span reads SS. Asp-226 provides a ligand contact to Mg(2+).

This sequence belongs to the HAD-like hydrolase superfamily. MasA/MtnC family. In terms of assembly, monomer. The cofactor is Mg(2+).

Its subcellular location is the cytoplasm. It localises to the nucleus. The catalysed reaction is 5-methylsulfanyl-2,3-dioxopentyl phosphate + H2O = 1,2-dihydroxy-5-(methylsulfanyl)pent-1-en-3-one + phosphate. The protein operates within amino-acid biosynthesis; L-methionine biosynthesis via salvage pathway; L-methionine from S-methyl-5-thio-alpha-D-ribose 1-phosphate: step 3/6. Its pathway is amino-acid biosynthesis; L-methionine biosynthesis via salvage pathway; L-methionine from S-methyl-5-thio-alpha-D-ribose 1-phosphate: step 4/6. Bifunctional enzyme that catalyzes the enolization of 2,3-diketo-5-methylthiopentyl-1-phosphate (DK-MTP-1-P) into the intermediate 2-hydroxy-3-keto-5-methylthiopentenyl-1-phosphate (HK-MTPenyl-1-P), which is then dephosphorylated to form the acireductone 1,2-dihydroxy-3-keto-5-methylthiopentene (DHK-MTPene). The protein is Enolase-phosphatase E1 of Candida dubliniensis (strain CD36 / ATCC MYA-646 / CBS 7987 / NCPF 3949 / NRRL Y-17841) (Yeast).